The following is a 2210-amino-acid chain: RNA-directed RNA polymerase L (2210 aa).

Positions 26–285 (KAIFLSQTKL…KCAIMSEEDS (260 aa)) are endonuclease. The Mn(2+) site is built by E51, D88, and E101. K114 is an active-site residue. Residues 1163-1359 (LDMKSVVRQG…FLSDKLNKFV (197 aa)) enclose the RdRp catalytic domain. Mg(2+) is bound at residue D1319.

Belongs to the Bunyavirales RNA polymerase family. In terms of assembly, homomultimer; the oligomeric structure is essential for the polymerase activity. Interacts with nucleoprotein N. Interacts with protein Z; this interaction inhibits viral transcription and replication, Z partially blocks the product exit tunnel for the releasing nascent RNA product. Mn(2+) serves as cofactor. It depends on Mg(2+) as a cofactor.

Its subcellular location is the virion. It localises to the host cytoplasm. The enzyme catalyses RNA(n) + a ribonucleoside 5'-triphosphate = RNA(n+1) + diphosphate. RNA-dependent RNA polymerase, which is responsible for the replication and transcription of the viral RNA genome using antigenomic RNA as an intermediate. During transcription, synthesizes subgenomic RNAs and assures their capping by a cap-snatching mechanism, which involves the endonuclease activity cleaving the host capped pre-mRNAs. These short capped RNAs are then used as primers for viral transcription. The 3'-end of subgenomic mRNAs molecules are heterogeneous and not polyadenylated. The replicase function is to direct synthesis of antigenomic and genomic RNA which are encapsidated and non capped. As a consequence of the use of the same enzyme for both transcription and replication, these mechanisms need to be well coordinated. These processes may be regulated by proteins N and Z in a dose-dependent manner. Z protein inhibits the viral polymerase L und thus the viral transcription and RNA synthesis. This chain is RNA-directed RNA polymerase L, found in Sigmodon alstoni (PIRV).